A 235-amino-acid chain; its full sequence is Sugar fermentation stimulation protein homolog (235 aa).

This sequence belongs to the SfsA family.

In Photorhabdus laumondii subsp. laumondii (strain DSM 15139 / CIP 105565 / TT01) (Photorhabdus luminescens subsp. laumondii), this protein is Sugar fermentation stimulation protein homolog.